Reading from the N-terminus, the 486-residue chain is Ribosomal RNA small subunit methyltransferase F (486 aa).

S-adenosyl-L-methionine contacts are provided by residues 122 to 128 (ASAPGSK), glutamate 146, aspartate 173, and aspartate 191. Catalysis depends on cysteine 244, which acts as the Nucleophile.

It belongs to the class I-like SAM-binding methyltransferase superfamily. RsmB/NOP family.

Its subcellular location is the cytoplasm. The enzyme catalyses cytidine(1407) in 16S rRNA + S-adenosyl-L-methionine = 5-methylcytidine(1407) in 16S rRNA + S-adenosyl-L-homocysteine + H(+). Its function is as follows. Specifically methylates the cytosine at position 1407 (m5C1407) of 16S rRNA. This is Ribosomal RNA small subunit methyltransferase F from Shewanella loihica (strain ATCC BAA-1088 / PV-4).